Consider the following 250-residue polypeptide: Carboxy-S-adenosyl-L-methionine synthase (250 aa).

S-adenosyl-L-methionine-binding positions include Tyr-45, 70-72 (GCS), 95-96 (DN), 123-124 (DI), Asn-138, and Arg-205.

It belongs to the class I-like SAM-binding methyltransferase superfamily. Cx-SAM synthase family. Homodimer.

It carries out the reaction prephenate + S-adenosyl-L-methionine = carboxy-S-adenosyl-L-methionine + 3-phenylpyruvate + H2O. In terms of biological role, catalyzes the conversion of S-adenosyl-L-methionine (SAM) to carboxy-S-adenosyl-L-methionine (Cx-SAM). The protein is Carboxy-S-adenosyl-L-methionine synthase of Marinobacter nauticus (strain ATCC 700491 / DSM 11845 / VT8) (Marinobacter aquaeolei).